Consider the following 89-residue polypeptide: Probable Fe(2+)-trafficking protein (89 aa).

The protein belongs to the Fe(2+)-trafficking protein family.

Could be a mediator in iron transactions between iron acquisition and iron-requiring processes, such as synthesis and/or repair of Fe-S clusters in biosynthetic enzymes. The chain is Probable Fe(2+)-trafficking protein from Acinetobacter baumannii (strain SDF).